Reading from the N-terminus, the 119-residue chain is Large ribosomal subunit protein uL24 (119 aa).

The protein belongs to the universal ribosomal protein uL24 family. As to quaternary structure, part of the 50S ribosomal subunit.

Functionally, one of two assembly initiator proteins, it binds directly to the 5'-end of the 23S rRNA, where it nucleates assembly of the 50S subunit. Located at the polypeptide exit tunnel on the outside of the subunit. This chain is Large ribosomal subunit protein uL24, found in Methanosarcina acetivorans (strain ATCC 35395 / DSM 2834 / JCM 12185 / C2A).